We begin with the raw amino-acid sequence, 503 residues long: MMMTKQKNSLAERLNIGEEARELKLGATFNPKNTSTAFHTIKYDFKPASVDTSRMASVDVGSNNQVTVTVPNSESSGVPHTVYKGNQREYAKECLMIYDKETGAITIEKLNHNIQVKKTRNEVSNKSVQLPGQNMGQGQPHNQGANGAGPAPTSVPGQGSGTAPKMENSTMRISTKTKVSTGSRRNNIIDFKPRNSPMQQNSPSRPVPVHRSPQSAPAWDANNAQQTLPSIPLITDDDDFGLRAALHNSGHANRSGSAAGQPDFVSTSSSTHIGKQRQAPPHGHGKRQQMHQRLSPPMAQQQQQHPSNYGRGYNGGHNHAQQQQQQQRNSPPRQRPSAYGHDNTMDVDSSREHELTSQSVAQAAAALEQQIGGVLSASSSSSESDSSDSDSGSDSDDSTEDDRSTQGQQQDHQQQPHQVYQNHNHTQQQVTQQHHNQLPNLGLGSISPAYGSNHQQQHQQQMLQHQQKQKQQSGIYASNGGFPNDFLQNDLQLSSNSSDDDDD.

Composition is skewed to polar residues over residues 119–145 and 167–186; these read TRNE…NQGA and ENST…SRRN. Disordered regions lie at residues 119-220, 250-360, and 372-503; these read TRNE…PAWD, GHAN…SQSV, and GGVL…DDDD. Phosphoserine is present on Ser-196. Positions 202–215 are enriched in low complexity; the sequence is SPSRPVPVHRSPQS. Polar residues-rich tracts occupy residues 250 to 273 and 298 to 307; these read GHAN…STHI and MAQQQQQHPS. Low complexity predominate over residues 308-337; that stretch reads NYGRGYNGGHNHAQQQQQQQRNSPPRQRPS. The segment covering 385–400 has biased composition (acidic residues); the sequence is DSSDSDSGSDSDDSTE. Low complexity-rich tracts occupy residues 406–437, 454–472, and 487–497; these read QGQQ…HHNQ, HQQQ…QKQQ, and LQNDLQLSSNS.

This sequence belongs to the EAF family.

The protein localises to the nucleus. In terms of biological role, promotes transcriptional elongation by Su(Tpl)/ELL. Essential for development. The protein is Ell-associated factor Eaf of Drosophila sechellia (Fruit fly).